The chain runs to 622 residues: DNA mismatch repair protein MutL (622 aa).

Residues 399-414 (SSQNFHPDENDYRAEE) show a composition bias toward basic and acidic residues. The tract at residues 399-422 (SSQNFHPDENDYRAEEASPAEENP) is disordered.

The protein belongs to the DNA mismatch repair MutL/HexB family.

Its function is as follows. This protein is involved in the repair of mismatches in DNA. It is required for dam-dependent methyl-directed DNA mismatch repair. May act as a 'molecular matchmaker', a protein that promotes the formation of a stable complex between two or more DNA-binding proteins in an ATP-dependent manner without itself being part of a final effector complex. The protein is DNA mismatch repair protein MutL of Phocaeicola vulgatus (strain ATCC 8482 / DSM 1447 / JCM 5826 / CCUG 4940 / NBRC 14291 / NCTC 11154) (Bacteroides vulgatus).